The sequence spans 37 residues: Large ribosomal subunit protein bL36c (37 aa).

Belongs to the bacterial ribosomal protein bL36 family.

The protein resides in the plastid. Its subcellular location is the chloroplast. This chain is Large ribosomal subunit protein bL36c, found in Nicotiana tomentosiformis (Tobacco).